The chain runs to 84 residues: U8-theraphotoxin-Hhn1b (84 aa).

Positions methionine 1–cysteine 21 are cleaved as a signal peptide. 4 cysteine pairs are disulfide-bonded: cysteine 23/cysteine 35, cysteine 29/cysteine 44, cysteine 34/cysteine 67, and cysteine 54/cysteine 75.

Belongs to the AVIT (prokineticin) family. In terms of tissue distribution, expressed by the venom gland.

Its subcellular location is the secreted. In Cyriopagopus hainanus (Chinese bird spider), this protein is U8-theraphotoxin-Hhn1b.